We begin with the raw amino-acid sequence, 142 residues long: Galactose-6-phosphate isomerase subunit LacA (142 aa).

This sequence belongs to the LacAB/RpiB family. In terms of assembly, heteromultimeric protein consisting of LacA and LacB.

The enzyme catalyses aldehydo-D-galactose 6-phosphate = keto-D-tagatose 6-phosphate. The protein operates within carbohydrate metabolism; D-galactose 6-phosphate degradation; D-tagatose 6-phosphate from D-galactose 6-phosphate: step 1/1. In Clostridium acetobutylicum (strain ATCC 824 / DSM 792 / JCM 1419 / IAM 19013 / LMG 5710 / NBRC 13948 / NRRL B-527 / VKM B-1787 / 2291 / W), this protein is Galactose-6-phosphate isomerase subunit LacA.